A 114-amino-acid chain; its full sequence is Helper of Tim protein 13 (114 aa).

A CHY-type; degenerate zinc finger spans residues 10–90 (LVDKESRCEH…DSLQCPNCRS (81 aa)). Zn(2+)-binding residues include cysteine 17, histidine 19, cysteine 40, cysteine 43, cysteine 67, cysteine 70, cysteine 85, and cysteine 88.

In terms of assembly, interacts with the small Tim proteins.

The protein resides in the mitochondrion intermembrane space. It is found in the mitochondrion membrane. Its function is as follows. Required for the assembly or recycling of the small Tim proteins in the mitochondrial intermembrane, thereby participating in the import and insertion of multi-pass transmembrane proteins into the mitochondrial inner membrane. The chain is Helper of Tim protein 13 (HOT13) from Kluyveromyces lactis (strain ATCC 8585 / CBS 2359 / DSM 70799 / NBRC 1267 / NRRL Y-1140 / WM37) (Yeast).